The chain runs to 153 residues: Jacalin-related lectin Calsepa (153 aa).

Ala-2 carries the N-acetylalanine modification. One can recognise a Jacalin-type lectin domain in the interval 6–152 (DTISGPWGNN…VDAIGTYNRH (147 aa)). N-glycan binding regions lie at residues 17 to 18 (GN), 95 to 96 (DN), and 140 to 144 (GYYVD).

The protein belongs to the jacalin lectin family. As to quaternary structure, homodimer. Post-translationally, not glycosylated. As to expression, rhizome (at protein level). Detected in the cortex and the pith of rhizome. Not detected in vascular tissues, pericycle, endodermis or rhizodermis.

The protein localises to the cytoplasm. Its activity is regulated as follows. Hemagglutinating activity is most inhibited by methyl alpha-mannopyranoside. This activity is inhibited to a less extent (about a third of the inhibition of that of methyl alpha-mannopyranoside) by methyl alpha-glucoside, other alpha-glucosides, such as maltose, isomaltose, panose or palatinose, and alpha-glucosides modified at the second position, such as methyl 2-deoxy-alpha-arabinoglucopyranoside or methyl 2-acetamido-2-deoxy alpha-glucopyranoside. Mildly inhibited by free monosaccharides, with glucose presenting at least 20-fold less inhibitory effect on hemagglutinating activity than mannose. Glycoproteins are somewhat inhibitory, the best being asialothyroglobulin and ovomucoid. Not inhibited by isomaltitol, sucrose or trehalose. Functionally, mannose-binding lectin. Preferentially binds mannose at concentrations ranging between 5 and 25 mM, but also binds glucose. Has a marked preference for methylated sugar derivatives, such as alpha-MeMan and alpha-MeGlc, at concentration down to 5 mM. Binds to N-glycans, but not to glycolipid-type or other type of glycans. Binds N-linked high-mannose-type glycans. Has a preference for smaller (Man(2)-Man(6)) high-mannose-type glycans to larger (Man(7)-Man(9)) ones. Recognizes both alpha1-6 extended and alpha1-3 extended monoantennary glycans. The addition of alpha1-2Man to the Man-alpha1-3Man-beta branch results in a significant loss of affinity, but beta1-2GlcNAc has some affinity. Has less affinity for biantennary glycans. However, affinity is significant for the biantennary complex-type N-glycans with bisecting GlcNAc. No affinity is observed for tri- and tetra-antennary glycans. Binds bisected glycans of the mouse brain. Selectively binds to bisecting N-glycans which are in back-fold conformation, and does not favor a glycan with an extend conformation. Has hemagglutinating activity against rabbit erythrocytes at 0.3 ug/ml and against trypsin-treated human erythrocytes at 5 ug/ml. Has mitogenic activity in murine cells. This chain is Jacalin-related lectin Calsepa, found in Calystegia sepium (Hedge bindweed).